The sequence spans 254 residues: 3-deoxy-manno-octulosonate cytidylyltransferase (254 aa).

It belongs to the KdsB family.

It localises to the cytoplasm. It catalyses the reaction 3-deoxy-alpha-D-manno-oct-2-ulosonate + CTP = CMP-3-deoxy-beta-D-manno-octulosonate + diphosphate. The protein operates within nucleotide-sugar biosynthesis; CMP-3-deoxy-D-manno-octulosonate biosynthesis; CMP-3-deoxy-D-manno-octulosonate from 3-deoxy-D-manno-octulosonate and CTP: step 1/1. It participates in bacterial outer membrane biogenesis; lipopolysaccharide biosynthesis. Activates KDO (a required 8-carbon sugar) for incorporation into bacterial lipopolysaccharide in Gram-negative bacteria. This chain is 3-deoxy-manno-octulosonate cytidylyltransferase, found in Pseudomonas paraeruginosa (strain DSM 24068 / PA7) (Pseudomonas aeruginosa (strain PA7)).